The following is a 423-amino-acid chain: Glucose-1-phosphate adenylyltransferase (423 aa).

Residues Tyr-98, Gly-163, 178–179 (EK), and Ser-189 each bind alpha-D-glucose 1-phosphate.

It belongs to the bacterial/plant glucose-1-phosphate adenylyltransferase family. In terms of assembly, homotetramer.

The catalysed reaction is alpha-D-glucose 1-phosphate + ATP + H(+) = ADP-alpha-D-glucose + diphosphate. The protein operates within glycan biosynthesis; glycogen biosynthesis. Its function is as follows. Involved in the biosynthesis of ADP-glucose, a building block required for the elongation reactions to produce glycogen. Catalyzes the reaction between ATP and alpha-D-glucose 1-phosphate (G1P) to produce pyrophosphate and ADP-Glc. This is Glucose-1-phosphate adenylyltransferase from Thermotoga maritima (strain ATCC 43589 / DSM 3109 / JCM 10099 / NBRC 100826 / MSB8).